The sequence spans 226 residues: Protein-L-isoaspartate O-methyltransferase (226 aa).

Ser75 is a catalytic residue.

Belongs to the methyltransferase superfamily. L-isoaspartyl/D-aspartyl protein methyltransferase family.

Its subcellular location is the cytoplasm. It carries out the reaction [protein]-L-isoaspartate + S-adenosyl-L-methionine = [protein]-L-isoaspartate alpha-methyl ester + S-adenosyl-L-homocysteine. Functionally, catalyzes the methyl esterification of L-isoaspartyl residues in peptides and proteins that result from spontaneous decomposition of normal L-aspartyl and L-asparaginyl residues. It plays a role in the repair and/or degradation of damaged proteins. In Lawsonia intracellularis (strain PHE/MN1-00), this protein is Protein-L-isoaspartate O-methyltransferase.